The following is a 399-amino-acid chain: C-type lectin domain family 4 member M (399 aa).

The Cytoplasmic portion of the chain corresponds to 1–49 (MSDSKEQRVQPLGLLEEDPTTSGIRLFPRDFQFQQTHGHKSSTGCLGHG). The Endocytosis signal signature appears at 14 to 15 (LL). A helical; Signal-anchor for type II membrane protein membrane pass occupies residues 50-70 (PLVLQLLSFTLLAGVLVAILV). Topologically, residues 71–399 (QVYKVPSSLS…KKPTACFRDE (329 aa)) are extracellular. An N-linked (GlcNAc...) asparagine glycan is attached at Asn92. 7 tandem repeats follow at residues 108–130 (KLQEIYQELIQLKAAVGELPEKS), 131–153 (TLQEIYQELTRLKAAVGELPEKS), 154–176 (RLQEIYQELTRLKAAVGELPEKS), 177–199 (KQQEIYQELTRLKAAVGELPEKS), 200–222 (KQQEIYQELTRLKAAVGELPEKS), 223–245 (KQQEIYQELTRLKAAVGELPDQS), and 246–268 (KQQQIYQELTDLKTAFERLCCRC). Residues 108 to 269 (KLQEIYQELI…AFERLCCRCP (162 aa)) are 7 X approximate tandem repeats. Cystine bridges form between Cys265-Cys395, Cys268-Cys279, Cys296-Cys389, and Cys368-Cys381. In terms of domain architecture, C-type lectin spans 274–390 (FFQGNCYFIS…CNVDNYWICK (117 aa)). Residues Glu359, Asn361, Ser363, Glu366, Asn377, and Asp378 each contribute to the Ca(2+) site. N-linked (GlcNAc...) asparagine glycosylation is present at Asn361.

As to quaternary structure, homotetramer.

It localises to the membrane. Functionally, probable pathogen-recognition receptor involved in peripheral immune surveillance in liver. May mediate the endocytosis of pathogens which are subsequently degraded in lysosomal compartments. Probably recognizes in a calcium-dependent manner high mannose N-linked oligosaccharides in a variety of pathogen antigens. Is a receptor for ICAM3, probably by binding to mannose-like carbohydrates. The polypeptide is C-type lectin domain family 4 member M (CLEC4M) (Hylobates lar (Lar gibbon)).